A 379-amino-acid polypeptide reads, in one-letter code: UDP-N-acetylglucosamine--N-acetylmuramyl-(pentapeptide) pyrophosphoryl-undecaprenol N-acetylglucosamine transferase (379 aa).

UDP-N-acetyl-alpha-D-glucosamine is bound by residues 10-12, Asn-124, and Arg-165; that span reads TGG. The tract at residues 174–195 is disordered; it reads TRDQGPGIRDQEKHMTDSTGPA. UDP-N-acetyl-alpha-D-glucosamine contacts are provided by Ser-211, Ile-266, and Gln-311.

This sequence belongs to the glycosyltransferase 28 family. MurG subfamily.

The protein localises to the cell inner membrane. It carries out the reaction di-trans,octa-cis-undecaprenyl diphospho-N-acetyl-alpha-D-muramoyl-L-alanyl-D-glutamyl-meso-2,6-diaminopimeloyl-D-alanyl-D-alanine + UDP-N-acetyl-alpha-D-glucosamine = di-trans,octa-cis-undecaprenyl diphospho-[N-acetyl-alpha-D-glucosaminyl-(1-&gt;4)]-N-acetyl-alpha-D-muramoyl-L-alanyl-D-glutamyl-meso-2,6-diaminopimeloyl-D-alanyl-D-alanine + UDP + H(+). It participates in cell wall biogenesis; peptidoglycan biosynthesis. Its function is as follows. Cell wall formation. Catalyzes the transfer of a GlcNAc subunit on undecaprenyl-pyrophosphoryl-MurNAc-pentapeptide (lipid intermediate I) to form undecaprenyl-pyrophosphoryl-MurNAc-(pentapeptide)GlcNAc (lipid intermediate II). This is UDP-N-acetylglucosamine--N-acetylmuramyl-(pentapeptide) pyrophosphoryl-undecaprenol N-acetylglucosamine transferase from Pelobacter propionicus (strain DSM 2379 / NBRC 103807 / OttBd1).